The following is a 345-amino-acid chain: Uroporphyrinogen decarboxylase (345 aa).

Residues 27–31 (RQAGR), Phe46, Asp76, Tyr152, Ser207, and His320 contribute to the substrate site.

Belongs to the uroporphyrinogen decarboxylase family. Homodimer.

It localises to the cytoplasm. It carries out the reaction uroporphyrinogen III + 4 H(+) = coproporphyrinogen III + 4 CO2. It functions in the pathway porphyrin-containing compound metabolism; protoporphyrin-IX biosynthesis; coproporphyrinogen-III from 5-aminolevulinate: step 4/4. Its function is as follows. Catalyzes the decarboxylation of four acetate groups of uroporphyrinogen-III to yield coproporphyrinogen-III. The protein is Uroporphyrinogen decarboxylase of Geobacillus sp. (strain WCH70).